Here is a 342-residue protein sequence, read N- to C-terminus: N-acetyl-gamma-glutamyl-phosphate reductase (342 aa).

The active site involves Cys-149.

This sequence belongs to the NAGSA dehydrogenase family. Type 1 subfamily.

The protein resides in the cytoplasm. The enzyme catalyses N-acetyl-L-glutamate 5-semialdehyde + phosphate + NADP(+) = N-acetyl-L-glutamyl 5-phosphate + NADPH + H(+). It participates in amino-acid biosynthesis; L-arginine biosynthesis; N(2)-acetyl-L-ornithine from L-glutamate: step 3/4. In terms of biological role, catalyzes the NADPH-dependent reduction of N-acetyl-5-glutamyl phosphate to yield N-acetyl-L-glutamate 5-semialdehyde. The chain is N-acetyl-gamma-glutamyl-phosphate reductase from Ruegeria pomeroyi (strain ATCC 700808 / DSM 15171 / DSS-3) (Silicibacter pomeroyi).